The primary structure comprises 341 residues: Glycerol-3-phosphate dehydrogenase [NAD(P)+] (341 aa).

4 residues coordinate NADPH: Ser14, Phe15, Arg35, and Lys108. Positions 108 and 136 each coordinate sn-glycerol 3-phosphate. Residue Ala140 participates in NADPH binding. The sn-glycerol 3-phosphate site is built by Lys191, Asp244, Ser254, Arg255, and Asn256. Lys191 acts as the Proton acceptor in catalysis. Arg255 serves as a coordination point for NADPH. Residues Val279 and Glu281 each coordinate NADPH.

This sequence belongs to the NAD-dependent glycerol-3-phosphate dehydrogenase family.

The protein resides in the cytoplasm. It catalyses the reaction sn-glycerol 3-phosphate + NAD(+) = dihydroxyacetone phosphate + NADH + H(+). The enzyme catalyses sn-glycerol 3-phosphate + NADP(+) = dihydroxyacetone phosphate + NADPH + H(+). It functions in the pathway membrane lipid metabolism; glycerophospholipid metabolism. In terms of biological role, catalyzes the reduction of the glycolytic intermediate dihydroxyacetone phosphate (DHAP) to sn-glycerol 3-phosphate (G3P), the key precursor for phospholipid synthesis. The polypeptide is Glycerol-3-phosphate dehydrogenase [NAD(P)+] (Pseudomonas fluorescens (strain ATCC BAA-477 / NRRL B-23932 / Pf-5)).